The chain runs to 235 residues: MQKQEKIIEMFNQIAPTYDKANRILSFGADVAWRKKACQRVMSLYLKKDLKIADIACGTGDMIEIWQESALKMEKNILNIKGIDPSSGMLNVAKEKFPNVEFIKAGAQNLPLESQSLDILSISYGIRNVVERQKALSEFARVLQKDGILVVLEFTKREKGGFIAACRDFYLKNILPSIGGIISKNKSAYEYLPNSIEGFLSKKEFILELKNAGFEMLDYKSFSFGVSSMFIAKKL.

S-adenosyl-L-methionine contacts are provided by T59, D84, and S123.

This sequence belongs to the class I-like SAM-binding methyltransferase superfamily. MenG/UbiE family.

The enzyme catalyses a 2-demethylmenaquinol + S-adenosyl-L-methionine = a menaquinol + S-adenosyl-L-homocysteine + H(+). It carries out the reaction a 2-methoxy-6-(all-trans-polyprenyl)benzene-1,4-diol + S-adenosyl-L-methionine = a 5-methoxy-2-methyl-3-(all-trans-polyprenyl)benzene-1,4-diol + S-adenosyl-L-homocysteine + H(+). Its pathway is quinol/quinone metabolism; menaquinone biosynthesis; menaquinol from 1,4-dihydroxy-2-naphthoate: step 2/2. It functions in the pathway cofactor biosynthesis; ubiquinone biosynthesis. Functionally, methyltransferase required for the conversion of demethylmenaquinol (DMKH2) to menaquinol (MKH2) and the conversion of 2-polyprenyl-6-methoxy-1,4-benzoquinol (DDMQH2) to 2-polyprenyl-3-methyl-6-methoxy-1,4-benzoquinol (DMQH2). The sequence is that of Ubiquinone/menaquinone biosynthesis C-methyltransferase UbiE from Campylobacter jejuni subsp. jejuni serotype O:2 (strain ATCC 700819 / NCTC 11168).